The following is a 345-amino-acid chain: S-adenosylmethionine:tRNA ribosyltransferase-isomerase (345 aa).

This sequence belongs to the QueA family. In terms of assembly, monomer.

It localises to the cytoplasm. It catalyses the reaction 7-aminomethyl-7-carbaguanosine(34) in tRNA + S-adenosyl-L-methionine = epoxyqueuosine(34) in tRNA + adenine + L-methionine + 2 H(+). The protein operates within tRNA modification; tRNA-queuosine biosynthesis. Its function is as follows. Transfers and isomerizes the ribose moiety from AdoMet to the 7-aminomethyl group of 7-deazaguanine (preQ1-tRNA) to give epoxyqueuosine (oQ-tRNA). The protein is S-adenosylmethionine:tRNA ribosyltransferase-isomerase of Shewanella woodyi (strain ATCC 51908 / MS32).